A 125-amino-acid polypeptide reads, in one-letter code: CLAVATA3/ESR (CLE)-related protein ESR3 (125 aa).

Residues 1–26 (MASRMGMVAIMSLFVYAIVVPTSVNA) form the signal peptide. The disordered stretch occupies residues 45-125 (QQQGGFIGHR…IGPPPLPDRY (81 aa)). Hydroxyproline is present on residues P75 and P78. O-linked (Ara...) hydroxyproline glycosylation occurs at P78.

The protein belongs to the CLV3/ESR signal peptide family. Post-translationally, the O-glycosylation (arabinosylation) of the hydroxyproline Pro-78 enhances binding affinity of the ESR3p peptide for its receptor. As to expression, seed endosperm.

It is found in the secreted. The protein localises to the extracellular space. Functionally, extracellular signal peptide that regulates cell fate. This chain is CLAVATA3/ESR (CLE)-related protein ESR3, found in Zea mays (Maize).